The chain runs to 109 residues: UPF0060 membrane protein mma_0129 (109 aa).

The next 4 helical transmembrane spans lie at 7-27, 31-51, 63-83, and 87-107; these read VALF…PYLW, GASI…VWLL, AAYG…VDGI, and NWDF…LFAP.

Belongs to the UPF0060 family.

The protein localises to the cell inner membrane. This is UPF0060 membrane protein mma_0129 from Janthinobacterium sp. (strain Marseille) (Minibacterium massiliensis).